We begin with the raw amino-acid sequence, 353 residues long: MLMRSVCFILLAVLLFSLSACEPSHQQQKQASAAKDEKKDIIPLSAEKADGAEGWLNNSTILYTASNPTKTELFAYRIFTGKAKKLYQTDGQIVDVQINAREQMILLQITHSQKTAVVLLNAEGETLYEKDYETYELEAAWNQYDPYQMMVTEFNENWDFHTYQVNAKKDESFLSPVQVPFIHWTSKNTFDYVKEGRDDKTGPLYTFDTASKTEQKLEDNVLFFDSFHQMSFTVKSASGGKGTYQFKTPQSTSPVTAKWPLQAKYTSLAPMEYDYDEAGGLFYTFKQSGDAYKLAAINVASGETKDLVSLREMEPIQISPNGKYALYGFHFEQIILLKSHETKQLIIDQKEME.

The N-terminal stretch at 1–20 is a signal peptide; that stretch reads MLMRSVCFILLAVLLFSLSA. C21 is lipidated: N-palmitoyl cysteine. Residue C21 is the site of S-diacylglycerol cysteine attachment.

It localises to the cell membrane. This is an uncharacterized protein from Bacillus subtilis (strain 168).